Consider the following 164-residue polypeptide: SsrA-binding protein (164 aa).

It belongs to the SmpB family.

It is found in the cytoplasm. Functionally, required for rescue of stalled ribosomes mediated by trans-translation. Binds to transfer-messenger RNA (tmRNA), required for stable association of tmRNA with ribosomes. tmRNA and SmpB together mimic tRNA shape, replacing the anticodon stem-loop with SmpB. tmRNA is encoded by the ssrA gene; the 2 termini fold to resemble tRNA(Ala) and it encodes a 'tag peptide', a short internal open reading frame. During trans-translation Ala-aminoacylated tmRNA acts like a tRNA, entering the A-site of stalled ribosomes, displacing the stalled mRNA. The ribosome then switches to translate the ORF on the tmRNA; the nascent peptide is terminated with the 'tag peptide' encoded by the tmRNA and targeted for degradation. The ribosome is freed to recommence translation, which seems to be the essential function of trans-translation. This Gluconobacter oxydans (strain 621H) (Gluconobacter suboxydans) protein is SsrA-binding protein.